Consider the following 259-residue polypeptide: Leucine-rich repeat-containing protein 3B (259 aa).

An N-terminal signal peptide occupies residues 1 to 33 (MNLVDLWLTRSLSMCLLLQSFVLMILCFHSASM). Positions 34-64 (CPKGCLCSSSGGLNVTCSNANLKEIPRDLPP) constitute an LRRNT domain. Residue N47 is glycosylated (N-linked (GlcNAc...) asparagine). LRR repeat units lie at residues 65 to 86 (ETVLLYLDSNQITSIPNEIFKD), 89 to 110 (QLRVLNLSKNGIEFIDEHAFKG), and 114 to 135 (TLQTLDLSDNRIQSVHKNAFNN). N94 carries an N-linked (GlcNAc...) asparagine glycan. The region spanning 145–197 (NPWHCDCTLQQVLRSMVSNHETAHNVICKTSVLDEHAGRPFLNAANDADLCNL) is the LRRCT domain. The chain crosses the membrane as a helical span at residues 205–225 (AMLVTMFGWFTMVISYVVYYV).

It belongs to the LRRC3 family.

It is found in the membrane. The polypeptide is Leucine-rich repeat-containing protein 3B (LRRC3B) (Bos taurus (Bovine)).